The chain runs to 663 residues: Protein pat-12 (663 aa).

A compositionally biased stretch (polar residues) spans Met1–Ser15. Disordered stretches follow at residues Met1–Tyr78, Arg367–Thr430, Phe517–Arg546, and Pro597–Arg663. Residues Arg367 to Arg380 show a composition bias toward basic and acidic residues. Residues Val381 to His400 are compositionally biased toward basic residues. Over residues Phe517–Ser526 the composition is skewed to polar residues. Basic and acidic residues-rich tracts occupy residues Phe620–Asp640 and Asn649–Arg663.

In terms of assembly, interacts with vab-10 (via plankin domain). In terms of tissue distribution, isoform a: Expressed in the uterus, the vulva, the rectum, mechanosensory neurons and in head and tail neurons. Isoform e: Expressed in spermatheca and weakly in the vulva. Isoform f: Expressed in spermatheca and weakly in the vulva. Isoform i: Expressed in spermatheca and weakly in the vulva.

It localises to the apical cell membrane. The protein localises to the basal cell membrane. The protein resides in the cytoplasm. It is found in the cell junction. Its subcellular location is the hemidesmosome. It localises to the cell membrane. The protein localises to the cytoskeleton. Functionally, required for embryonic morphology and development. Plays both a functional and a structural role in the maintenance and probably biogenesis of fibrous organelles, a hemidesomosome-like junction structure, which ensures muscle stability and muscle connection to the external cuticle. The polypeptide is Protein pat-12 (Caenorhabditis elegans).